The primary structure comprises 151 residues: MAKILLVYATMSGNTEAMADLIEKGLQEALAEVDRFEAMDIDDAQLFTDYDHVIMGTYTWGDGDLPDEFLDLVEDMEEIDFSGKTCAVFGSGDTAYEFFCGAVDTLEAKIKERGGDIVLPSVKIENNPEGEEEEELINFGRQFAKKSGCAV.

A Flavodoxin-like domain is found at 4 to 144; the sequence is ILLVYATMSG…ELINFGRQFA (141 aa). FMN is bound by residues 10-14 and 88-119; these read TMSGN and VFGS…DIVL.

This sequence belongs to the flavodoxin family. It depends on FMN as a cofactor.

In terms of biological role, low-potential electron donor to a number of redox enzymes. In Bacillus subtilis (strain 168), this protein is Probable flavodoxin 2 (ykuP).